The following is a 437-amino-acid chain: Phosphoglucosamine mutase (437 aa).

The active-site Phosphoserine intermediate is Ser93. Mg(2+)-binding residues include Ser93, Asp230, Asp232, and Asp234. Ser93 is modified (phosphoserine).

The protein belongs to the phosphohexose mutase family. It depends on Mg(2+) as a cofactor. Post-translationally, activated by phosphorylation.

The catalysed reaction is alpha-D-glucosamine 1-phosphate = D-glucosamine 6-phosphate. Its function is as follows. Catalyzes the conversion of glucosamine-6-phosphate to glucosamine-1-phosphate. The sequence is that of Phosphoglucosamine mutase from Clavibacter michiganensis subsp. michiganensis (strain NCPPB 382).